The sequence spans 309 residues: Sulfate adenylyltransferase subunit 2 (309 aa).

Belongs to the PAPS reductase family. CysD subfamily. Heterodimer composed of CysD, the smaller subunit, and CysN.

The catalysed reaction is sulfate + ATP + H(+) = adenosine 5'-phosphosulfate + diphosphate. The protein operates within sulfur metabolism; hydrogen sulfide biosynthesis; sulfite from sulfate: step 1/3. Its function is as follows. With CysN forms the ATP sulfurylase (ATPS) that catalyzes the adenylation of sulfate producing adenosine 5'-phosphosulfate (APS) and diphosphate, the first enzymatic step in sulfur assimilation pathway. APS synthesis involves the formation of a high-energy phosphoric-sulfuric acid anhydride bond driven by GTP hydrolysis by CysN coupled to ATP hydrolysis by CysD. The chain is Sulfate adenylyltransferase subunit 2 from Methylorubrum extorquens (strain CM4 / NCIMB 13688) (Methylobacterium extorquens).